The sequence spans 156 residues: MPRKGSVPKRDVLPDPIHNSKLVTKLINKIMLDGKRGTAQRILYSAFNLVEQRSGRDALEVFEEAINNIMPVLEVKARRVGGSNYQVPVEVRPERRTTLGLRWLVNYARLRGEKTMEDRLANEILDAANNTGGAVKKREDTHKMAEANKAFAHYRW.

This sequence belongs to the universal ribosomal protein uS7 family. As to quaternary structure, part of the 30S ribosomal subunit. Contacts proteins S9 and S11.

Its function is as follows. One of the primary rRNA binding proteins, it binds directly to 16S rRNA where it nucleates assembly of the head domain of the 30S subunit. Is located at the subunit interface close to the decoding center, probably blocks exit of the E-site tRNA. This is Small ribosomal subunit protein uS7 from Staphylococcus aureus (strain bovine RF122 / ET3-1).